The chain runs to 270 residues: Transcription factor PU.1 (270 aa).

Residues leucine 124–glycine 162 are disordered. Phosphoserine occurs at positions 140 and 146. Low complexity predominate over residues leucine 153–glycine 162. The segment at residues isoleucine 170–serine 253 is a DNA-binding region (ETS). Residues lysine 217, arginine 230, arginine 233, and lysine 243 each coordinate DNA.

This sequence belongs to the ETS family. Binds DNA as a monomer. Can form homomers. Directly interacts with CEBPD/NF-IL6-beta; this interaction does not affect DNA-binding properties of each partner. Interacts with NONO/p54(nrb). Interacts with RUNX1/AML1. Interacts with GFI1; the interaction represses SPI1 transcriptional activity, hence blocks SPI1-induced macrophage differentiation of myeloid progenitor cells. Interacts with CEBPE. Interacts with IRF4/Pip and IRF8. Interacts with JUN. Interacts with RB1. Interacts with TBP.

Its subcellular location is the nucleus. With respect to regulation, transcriptional activity at macrophage-specific genes is inhibited by interaction with GFI1, which results in the inhibition of SPI1-induced macrophage differentiation of myeloid progenitor cells, but not that of the granulocyte lineage. Its function is as follows. Pioneer transcription factor, which controls hematopoietic cell fate by decompacting stem cell heterochromatin and allowing other transcription factors to enter otherwise inaccessible genomic sites. Once in open chromatin, can directly control gene expression by binding genetic regulatory elements and can also more broadly influence transcription by recruiting transcription factors, such as interferon regulatory factors (IRFs), to otherwise inaccessible genomic regions. Transcriptionally activates genes important for myeloid and lymphoid lineages, such as CSF1R. Transcriptional activation from certain promoters, possibly containing low affinity binding sites, is achieved cooperatively with other transcription factors. FCER1A transactivation is achieved in cooperation with GATA1. May be particularly important for the pro- to pre-B cell transition. Binds (via the ETS domain) onto the purine-rich DNA core sequence 5'-GAGGAA-3', also known as the PU-box. In vitro can bind RNA and interfere with pre-mRNA splicing. The chain is Transcription factor PU.1 (SPI1) from Sus scrofa (Pig).